Here is a 204-residue protein sequence, read N- to C-terminus: DNA-directed RNA polymerase III subunit RPC8 (204 aa).

The interval 158–178 (VDTSPTGPSSAEAASSSEELP) is disordered. Over residues 166–175 (SSAEAASSSE) the composition is skewed to low complexity.

This sequence belongs to the eukaryotic RPB7/RPC8 RNA polymerase subunit family. As to quaternary structure, component of the RNA polymerase III complex consisting of 17 subunits: a ten-subunit horseshoe-shaped catalytic core composed of POLR3A/RPC1, POLR3B/RPC2, POLR1C/RPAC1, POLR1D/RPAC2, POLR3K/RPC10, POLR2E/RPABC1, POLR2F/RPABC2, POLR2H/RPABC3, POLR2K/RPABC4 and POLR2L/RPABC5; a mobile stalk composed of two subunits POLR3H/RPC8 and CRCP/RPC9, protruding from the core and functioning primarily in transcription initiation; and additional subunits homologous to general transcription factors of the RNA polymerase II machinery, POLR3C/RPC3-POLR3F/RPC6-POLR3G/RPC7 heterotrimer required for transcription initiation and POLR3D/RPC4-POLR3E/RPC5 heterodimer involved in both transcription initiation and termination. Interacts with CRCP/RPC9. POLR3H/RPC8 and CRCP/RPC9 probably form a Pol III subcomplex.

The protein resides in the nucleus. DNA-dependent RNA polymerase catalyzes the transcription of DNA into RNA using the four ribonucleoside triphosphates as substrates. Specific peripheric component of RNA polymerase III (Pol III) which synthesizes small non-coding RNAs including 5S rRNA, snRNAs, tRNAs and miRNAs from at least 500 distinct genomic loci. With CRCP/RPC9 forms a mobile stalk that protrudes from Pol III core and functions primarily in transcription initiation. Pol III plays a key role in sensing and limiting infection by intracellular bacteria and DNA viruses. Acts as nuclear and cytosolic DNA sensor involved in innate immune response. Can sense non-self dsDNA that serves as template for transcription into dsRNA. The non-self RNA polymerase III transcripts, such as Epstein-Barr virus-encoded RNAs (EBERs) induce type I interferon and NF-kappa-B through the RIG-I pathway. This Bos taurus (Bovine) protein is DNA-directed RNA polymerase III subunit RPC8 (POLR3H).